The sequence spans 264 residues: Tryptophan synthase alpha chain (264 aa).

Active-site proton acceptor residues include E49 and D60.

It belongs to the TrpA family. As to quaternary structure, tetramer of two alpha and two beta chains.

It carries out the reaction (1S,2R)-1-C-(indol-3-yl)glycerol 3-phosphate + L-serine = D-glyceraldehyde 3-phosphate + L-tryptophan + H2O. It functions in the pathway amino-acid biosynthesis; L-tryptophan biosynthesis; L-tryptophan from chorismate: step 5/5. The alpha subunit is responsible for the aldol cleavage of indoleglycerol phosphate to indole and glyceraldehyde 3-phosphate. This chain is Tryptophan synthase alpha chain, found in Picosynechococcus sp. (strain ATCC 27264 / PCC 7002 / PR-6) (Agmenellum quadruplicatum).